The following is a 367-amino-acid chain: 3-dehydroquinate synthase (367 aa).

Residues 108-112, 132-133, Lys145, and Lys154 contribute to the NAD(+) site; these read GVIGD and TT. Zn(2+)-binding residues include Glu187, His249, and His267.

Belongs to the sugar phosphate cyclases superfamily. Dehydroquinate synthase family. Requires Co(2+) as cofactor. The cofactor is Zn(2+). It depends on NAD(+) as a cofactor.

It is found in the cytoplasm. The catalysed reaction is 7-phospho-2-dehydro-3-deoxy-D-arabino-heptonate = 3-dehydroquinate + phosphate. It participates in metabolic intermediate biosynthesis; chorismate biosynthesis; chorismate from D-erythrose 4-phosphate and phosphoenolpyruvate: step 2/7. Its function is as follows. Catalyzes the conversion of 3-deoxy-D-arabino-heptulosonate 7-phosphate (DAHP) to dehydroquinate (DHQ). The sequence is that of 3-dehydroquinate synthase from Paracoccus denitrificans (strain Pd 1222).